A 376-amino-acid polypeptide reads, in one-letter code: NIF3-like protein 1 (376 aa).

K108 carries the post-translational modification N6-acetyllysine. Residues 243–376 (LLLHTGMGRL…ETDRDPLRVV (134 aa)) are mediates interaction with COPS2. Position 254 is a phosphothreonine (T254). At S258 the chain carries Phosphoserine.

This sequence belongs to the GTP cyclohydrolase I type 2/NIF3 family. In terms of assembly, homodimer. Interacts with COPS2. Interacts with THOC7.

Its subcellular location is the cytoplasm. It localises to the nucleus. In terms of biological role, may function as a transcriptional corepressor through its interaction with COPS2, negatively regulating the expression of genes involved in neuronal differentiation. In Rattus norvegicus (Rat), this protein is NIF3-like protein 1.